A 660-amino-acid polypeptide reads, in one-letter code: DNA ligase (660 aa).

NAD(+) contacts are provided by residues 33-37 (DFVYD), 82-83 (SL), and glutamate 110. The active-site N6-AMP-lysine intermediate is the lysine 112. The NAD(+) site is built by arginine 133, glutamate 167, lysine 281, and lysine 305. Zn(2+) is bound by residues cysteine 396, cysteine 399, cysteine 412, and cysteine 417. The BRCT domain occupies 583–660 (GENKLLAGKK…SFEDIKSYLD (78 aa)).

This sequence belongs to the NAD-dependent DNA ligase family. LigA subfamily. Requires Mg(2+) as cofactor. The cofactor is Mn(2+).

It carries out the reaction NAD(+) + (deoxyribonucleotide)n-3'-hydroxyl + 5'-phospho-(deoxyribonucleotide)m = (deoxyribonucleotide)n+m + AMP + beta-nicotinamide D-nucleotide.. In terms of biological role, DNA ligase that catalyzes the formation of phosphodiester linkages between 5'-phosphoryl and 3'-hydroxyl groups in double-stranded DNA using NAD as a coenzyme and as the energy source for the reaction. It is essential for DNA replication and repair of damaged DNA. The protein is DNA ligase of Borreliella burgdorferi (strain ZS7) (Borrelia burgdorferi).